Consider the following 1336-residue polypeptide: Lysine-specific demethylase 2B (1336 aa).

The segment at 1–25 (MAGPQMGGSAEDHPPRKRHAAEKQK) is disordered. The segment covering 15–25 (PRKRHAAEKQK) has biased composition (basic residues). Serine 57 is modified (phosphoserine). Positions 178–346 (FSHTKLEHLV…MQLRIYEIED (169 aa)) constitute a JmjC domain. Threonine 239 serves as a coordination point for substrate. Positions 242 and 244 each coordinate Fe cation. Lysine 259 lines the substrate pocket. Residue histidine 314 participates in Fe cation binding. Residues 410–430 (MEEEACDQQPQEEEEKDEEGE) show a composition bias toward acidic residues. Positions 410–465 (MEEEACDQQPQEEEEKDEEGEGRDRAPKPPTDGSTSPTSTPSEDQEALGKKPKAPA) are disordered. A compositionally biased stretch (low complexity) spans 440 to 451 (TDGSTSPTSTPS). Residues serine 474 and serine 477 each carry the phosphoserine modification. Position 493 is a phosphothreonine (threonine 493). The residue at position 497 (serine 497) is a Phosphoserine. Residues 606–652 (ARRRRTRCRKCEACLRTECGECHFCKDMKKFGGPGRMKQSCIMRQCI) form a CXXC-type zinc finger. The Zn(2+) site is built by cysteine 613, cysteine 616, cysteine 619, cysteine 624, cysteine 627, cysteine 630, cysteine 646, cysteine 651, cysteine 662, cysteine 665, cysteine 688, cysteine 691, histidine 696, cysteine 699, cysteine 719, and cysteine 722. The PHD-type zinc-finger motif lies at 659-725 (TAVCLVCGEA…CWECPKCNHA (67 aa)). 2 disordered regions span residues 727–843 (KTGK…SLSP) and 855–1034 (QLKP…SPPK). Residues 749 to 799 (KEQKMNRDNKEGQEPAKRRSECEEAPRRRSDEHSKKVPPDGLLRRKSDDVH) show a composition bias toward basic and acidic residues. Low complexity predominate over residues 819 to 843 (SSLQTSPGSSSHLSPRPPLGSSLSP). Glycyl lysine isopeptide (Lys-Gly) (interchain with G-Cter in SUMO2) cross-links involve residues lysine 857 and lysine 890. The span at 902–911 (PKTRESDHSR) shows a compositional bias: basic and acidic residues. The span at 932–941 (KVKMRRKRRL) shows a compositional bias: basic residues. Positions 942–960 (PNKELSRELSKELNHEIQR) are enriched in basic and acidic residues. Residues 943-971 (NKELSRELSKELNHEIQRTENSLANENQQ) adopt a coiled-coil conformation. Serine 951 carries the post-translational modification Phosphoserine. Residues 961-971 (TENSLANENQQ) are compositionally biased toward polar residues. A phosphoserine mark is found at serine 975, serine 979, serine 1018, and serine 1031. Positions 1014 to 1024 (PSLRSPPRVIS) are enriched in low complexity. The F-box domain maps to 1059 to 1105 (DGAAHVMHREVWMAVFSYLSHQDLCVCMRVCRTWNRWCCDKRLWTRI). LRR repeat units follow at residues 1093 to 1120 (NRWCCDKRLWTRIDLNHCKSITPLMLSG), 1133 to 1154 (WTNISKKQLSWLINRLPGLRDL), 1156 to 1182 (LSGCSWIAVSALCSSSCPLLRTLDVQW), 1222 to 1247 (GLDITDASLRLIIRHMPLLSKLHLSY), 1248 to 1277 (CNHVTDQSINLLTAVGTTTRDSLTEINLSD), 1278 to 1302 (CNKVTDQCLSFFKRCGNICHIDLRY), and 1303 to 1336 (CKQVTKEGCEQFIAEMSVSVQFGQVEEKLLQKLS).

The protein belongs to the JHDM1 histone demethylase family. Interacts with SKP1, forming heterodimers. The heterodimeric KDM2B-SKP1 complex interacts with the PCGF1-BCORL1 heterodimeric complex to form a homotetrameric polycomb repression complex 1 (PRC1.1). Directly interacts with CUL1. The SKP1-KDM2B complex interacts with UBB. Requires Fe(2+) as cofactor.

The protein resides in the nucleus. Its subcellular location is the nucleolus. It localises to the chromosome. The enzyme catalyses N(6),N(6)-dimethyl-L-lysyl(36)-[histone H3] + 2 2-oxoglutarate + 2 O2 = L-lysyl(36)-[histone H3] + 2 formaldehyde + 2 succinate + 2 CO2. Histone demethylase activity is inhibited by fumarate. Its function is as follows. Histone demethylase that demethylates 'Lys-4' and 'Lys-36' of histone H3, thereby playing a central role in histone code. Preferentially demethylates trimethylated H3 'Lys-4' and dimethylated H3 'Lys-36' residue while it has weak or no activity for mono- and tri-methylated H3 'Lys-36'. Preferentially binds the transcribed region of ribosomal RNA and represses the transcription of ribosomal RNA genes which inhibits cell growth and proliferation. May also serve as a substrate-recognition component of the SCF (SKP1-CUL1-F-box protein)-type E3 ubiquitin ligase complex. In Homo sapiens (Human), this protein is Lysine-specific demethylase 2B (KDM2B).